The following is a 576-amino-acid chain: Flagellin B (576 aa).

Belongs to the bacterial flagellin family. In terms of assembly, heteromer of FlaA and FlaB. Interacts with FliW. Interacts with FliS.

The protein resides in the secreted. It localises to the bacterial flagellum. Its function is as follows. Flagellin is the subunit protein which polymerizes to form the filaments of bacterial flagella. The chain is Flagellin B (flaB) from Campylobacter jejuni subsp. jejuni serotype O:6 (strain 81116 / NCTC 11828).